Consider the following 123-residue polypeptide: Intracellular iron chaperone frataxin (123 aa).

As to quaternary structure, homodimer, upon Fe(2+) binding. Interacts with the SufS/SufU complex. Interacts with CpfC. Fe(2+) is required as a cofactor.

Its subcellular location is the cytoplasm. In terms of biological role, plays an essential role in iron intracellular trafficking to iron cofactor biogenesis systems including iron-sulfur cluster (Fe-S) or heme assembly. Promotes the biosynthesis of iron-sulfur clusters by delivering Fe to the complex composed of the cysteine desulfurase SufS and the zinc-dependent sulfurtransferase SufU. Also plays a critical role in coproporphyrin-dependent heme b biogenesis and thus provides an essential function for the bacterial global metabolism. This Bacillus subtilis (strain 168) protein is Intracellular iron chaperone frataxin (fra).